The primary structure comprises 123 residues: Large ribosomal subunit protein uL14 (123 aa).

The protein belongs to the universal ribosomal protein uL14 family. As to quaternary structure, part of the 50S ribosomal subunit. Forms a cluster with proteins L3 and L19. In the 70S ribosome, L14 and L19 interact and together make contacts with the 16S rRNA in bridges B5 and B8.

Binds to 23S rRNA. Forms part of two intersubunit bridges in the 70S ribosome. This Buchnera aphidicola subsp. Cinara cedri (strain Cc) protein is Large ribosomal subunit protein uL14.